We begin with the raw amino-acid sequence, 106 residues long: Thioredoxin (106 aa).

The 105-residue stretch at 2–106 (SHYIELTEEN…LKEQLNKLLG (105 aa)) folds into the Thioredoxin domain. A disulfide bridge connects residues cysteine 30 and cysteine 33.

This sequence belongs to the thioredoxin family.

Participates in various redox reactions through the reversible oxidation of its active center dithiol to a disulfide and catalyzes dithiol-disulfide exchange reactions. This is Thioredoxin (trxA) from Helicobacter pylori (strain J99 / ATCC 700824) (Campylobacter pylori J99).